A 69-amino-acid chain; its full sequence is Purkinje cell protein 4-like protein 1 (69 aa).

Over residues 1–15 (MSELNTKTSPATNQA) the composition is skewed to polar residues. The disordered stretch occupies residues 1–47 (MSELNTKTSPATNQAPGPEEKGKAGSAKKTEDEEEEIDIDLTAPETE). T8 bears the Phosphothreonine mark. The span at 18 to 31 (PEEKGKAGSAKKTE) shows a compositional bias: basic and acidic residues. Residues 46–69 (TEKAALAIQGKFRRFQKRKKDPSS) form the IQ domain.

Belongs to the PCP4 family.

This chain is Purkinje cell protein 4-like protein 1 (PCP4L1), found in Bos taurus (Bovine).